A 692-amino-acid chain; its full sequence is Elongation factor G (692 aa).

Residues E8–L282 enclose the tr-type G domain. GTP is bound by residues A17–T24, D81–H85, and N135–D138.

Belongs to the TRAFAC class translation factor GTPase superfamily. Classic translation factor GTPase family. EF-G/EF-2 subfamily.

The protein resides in the cytoplasm. Functionally, catalyzes the GTP-dependent ribosomal translocation step during translation elongation. During this step, the ribosome changes from the pre-translocational (PRE) to the post-translocational (POST) state as the newly formed A-site-bound peptidyl-tRNA and P-site-bound deacylated tRNA move to the P and E sites, respectively. Catalyzes the coordinated movement of the two tRNA molecules, the mRNA and conformational changes in the ribosome. The protein is Elongation factor G of Bacillus mycoides (strain KBAB4) (Bacillus weihenstephanensis).